The primary structure comprises 282 residues: MTLFESIVLGVVQGLTEFLPVSSTAHLRIIPALAGWEDPGAAFTAVVQLGTLAAVLIYFYKDIYAILAAVIQGIMKGRPFDTHEAAMGWMIAVGTLPIVICGLLFKTEIETSLRSLYWVSGALIGFALLLLVAEWSVKKRLKQNMSMTSMDTIGWKEAIFTGFAQCLALIPGASRSGVTITGGLFLNMSRESAARFSFLLSLPSVFAAALFELYHTWDIIASSAGSIAAITAATITAGITGYLSIAFLISYLKKHTTSIFIIYRIILGAGILSLIAAGRLQP.

A run of 7 helical transmembrane segments spans residues 1-21 (MTLF…FLPV), 40-60 (GAAF…IYFY), 85-105 (AAMG…GLLF), 117-137 (YWVS…EWSV), 196-216 (FSFL…LYHT), 229-249 (AITA…AFLI), and 258-278 (SIFI…IAAG).

It belongs to the UppP family.

The protein resides in the cell inner membrane. It carries out the reaction di-trans,octa-cis-undecaprenyl diphosphate + H2O = di-trans,octa-cis-undecaprenyl phosphate + phosphate + H(+). Functionally, catalyzes the dephosphorylation of undecaprenyl diphosphate (UPP). Confers resistance to bacitracin. This is Undecaprenyl-diphosphatase from Chlorobium phaeobacteroides (strain DSM 266 / SMG 266 / 2430).